The sequence spans 261 residues: Triosephosphate isomerase (261 aa).

Residue 10–12 (NWK) participates in substrate binding. Histidine 100 acts as the Electrophile in catalysis. Glutamate 172 acts as the Proton acceptor in catalysis. Substrate-binding positions include glycine 178, serine 218, and 239–240 (GG).

It belongs to the triosephosphate isomerase family. In terms of assembly, homodimer.

Its subcellular location is the cytoplasm. The catalysed reaction is D-glyceraldehyde 3-phosphate = dihydroxyacetone phosphate. Its pathway is carbohydrate biosynthesis; gluconeogenesis. The protein operates within carbohydrate degradation; glycolysis; D-glyceraldehyde 3-phosphate from glycerone phosphate: step 1/1. Involved in the gluconeogenesis. Catalyzes stereospecifically the conversion of dihydroxyacetone phosphate (DHAP) to D-glyceraldehyde-3-phosphate (G3P). The polypeptide is Triosephosphate isomerase (Mycobacterium tuberculosis (strain CDC 1551 / Oshkosh)).